Reading from the N-terminus, the 192-residue chain is uncharacterized protein (192 aa).

Positions 29–160 (HRQAAVLIPI…PLDIYRRGDS (132 aa)) constitute a Nudix hydrolase domain. The Nudix box motif lies at 67-89 (GAVDDTDASVIAAALREAEEEVA). Mg(2+)-binding residues include Glu83 and Glu87.

This sequence belongs to the Nudix hydrolase family. PCD1 subfamily. Mn(2+) is required as a cofactor. Mg(2+) serves as cofactor.

Probably mediates the hydrolysis of some nucleoside diphosphate derivatives. This is an uncharacterized protein from Shigella sonnei (strain Ss046).